The following is a 642-amino-acid chain: Threonine--tRNA ligase (642 aa).

The 61-residue stretch at 1–61 folds into the TGS domain; sequence MPVITLPDGS…ENDAQLAIIT (61 aa). Positions 243–534 are catalytic; sequence DHRKIGKQLD…LTEEFAGFFP (292 aa). Lys-286 carries the post-translational modification N6-acetyllysine. The Zn(2+) site is built by Cys-334, His-385, and His-511.

The protein belongs to the class-II aminoacyl-tRNA synthetase family. As to quaternary structure, homodimer. Zn(2+) serves as cofactor.

Its subcellular location is the cytoplasm. It catalyses the reaction tRNA(Thr) + L-threonine + ATP = L-threonyl-tRNA(Thr) + AMP + diphosphate + H(+). Its function is as follows. Catalyzes the attachment of threonine to tRNA(Thr) in a two-step reaction: L-threonine is first activated by ATP to form Thr-AMP and then transferred to the acceptor end of tRNA(Thr). Also edits incorrectly charged L-seryl-tRNA(Thr). This chain is Threonine--tRNA ligase, found in Escherichia fergusonii (strain ATCC 35469 / DSM 13698 / CCUG 18766 / IAM 14443 / JCM 21226 / LMG 7866 / NBRC 102419 / NCTC 12128 / CDC 0568-73).